We begin with the raw amino-acid sequence, 190 residues long: Large ribosomal subunit protein bL9 (190 aa).

Belongs to the bacterial ribosomal protein bL9 family.

In terms of biological role, binds to the 23S rRNA. This chain is Large ribosomal subunit protein bL9, found in Rhodobacter capsulatus (strain ATCC BAA-309 / NBRC 16581 / SB1003).